The primary structure comprises 269 residues: Shikimate dehydrogenase (NADP(+)) (269 aa).

Shikimate is bound by residues S14–S16 and T61. Catalysis depends on K65, which acts as the Proton acceptor. Shikimate contacts are provided by N85 and D98. Residues G120 to A124, N143 to K148, and T211 each bind NADP(+). Y213 serves as a coordination point for shikimate. G234 lines the NADP(+) pocket.

The protein belongs to the shikimate dehydrogenase family. As to quaternary structure, homodimer.

The enzyme catalyses shikimate + NADP(+) = 3-dehydroshikimate + NADPH + H(+). It participates in metabolic intermediate biosynthesis; chorismate biosynthesis; chorismate from D-erythrose 4-phosphate and phosphoenolpyruvate: step 4/7. Involved in the biosynthesis of the chorismate, which leads to the biosynthesis of aromatic amino acids. Catalyzes the reversible NADPH linked reduction of 3-dehydroshikimate (DHSA) to yield shikimate (SA). The protein is Shikimate dehydrogenase (NADP(+)) of Archaeoglobus fulgidus (strain ATCC 49558 / DSM 4304 / JCM 9628 / NBRC 100126 / VC-16).